Here is a 300-residue protein sequence, read N- to C-terminus: Tyrosine recombinase XerC (300 aa).

The 87-residue stretch at 2–88 folds into the Core-binding (CB) domain; it reads TQEGKLEQQF…SLRSFYTFLL (87 aa). Positions 109-294 constitute a Tyr recombinase domain; sequence RLPKFFYSEE…TKEHLKSTYM (186 aa). Catalysis depends on residues arginine 150, lysine 174, histidine 246, arginine 249, and histidine 272. Tyrosine 281 serves as the catalytic O-(3'-phospho-DNA)-tyrosine intermediate.

This sequence belongs to the 'phage' integrase family. XerC subfamily. Forms a cyclic heterotetrameric complex composed of two molecules of XerC and two molecules of XerD.

The protein localises to the cytoplasm. Functionally, site-specific tyrosine recombinase, which acts by catalyzing the cutting and rejoining of the recombining DNA molecules. The XerC-XerD complex is essential to convert dimers of the bacterial chromosome into monomers to permit their segregation at cell division. It also contributes to the segregational stability of plasmids. This chain is Tyrosine recombinase XerC, found in Listeria welshimeri serovar 6b (strain ATCC 35897 / DSM 20650 / CCUG 15529 / CIP 8149 / NCTC 11857 / SLCC 5334 / V8).